A 472-amino-acid polypeptide reads, in one-letter code: Serine/threonine-protein kinase sax-1 (472 aa).

One can recognise a Protein kinase domain in the interval 87 to 381 (FESLKVIGRG…LDEIKQCPFF (295 aa)). Residues 93–101 (IGRGAFGEV) and Lys-116 each bind ATP. Asp-210 acts as the Proton acceptor in catalysis. Positions 382–452 (RRIDWNHIRE…KRFDGLTQKM (71 aa)) constitute an AGC-kinase C-terminal domain.

The protein belongs to the protein kinase superfamily. AGC Ser/Thr protein kinase family. Requires Mg(2+) as cofactor.

It localises to the cytoplasm. Its subcellular location is the nucleus. The enzyme catalyses L-seryl-[protein] + ATP = O-phospho-L-seryl-[protein] + ADP + H(+). It catalyses the reaction L-threonyl-[protein] + ATP = O-phospho-L-threonyl-[protein] + ADP + H(+). In terms of biological role, acts with sax-2 to restrict the growth of both primary and secondary neurites. Regulates mechanosensory tiling by controlling the termination point of sensory dendrites. This is Serine/threonine-protein kinase sax-1 from Caenorhabditis briggsae.